Here is a 306-residue protein sequence, read N- to C-terminus: tRNA dimethylallyltransferase (306 aa).

Residue 13–20 (GPTGAGKT) participates in ATP binding. 15–20 (TGAGKT) is a substrate binding site. Interaction with substrate tRNA regions lie at residues 38–41 (DSRQ) and 161–165 (QRNAR).

This sequence belongs to the IPP transferase family. As to quaternary structure, monomer. Mg(2+) is required as a cofactor.

It catalyses the reaction adenosine(37) in tRNA + dimethylallyl diphosphate = N(6)-dimethylallyladenosine(37) in tRNA + diphosphate. In terms of biological role, catalyzes the transfer of a dimethylallyl group onto the adenine at position 37 in tRNAs that read codons beginning with uridine, leading to the formation of N6-(dimethylallyl)adenosine (i(6)A). This chain is tRNA dimethylallyltransferase, found in Maridesulfovibrio salexigens (strain ATCC 14822 / DSM 2638 / NCIMB 8403 / VKM B-1763) (Desulfovibrio salexigens).